A 64-amino-acid chain; its full sequence is Translation machinery-associated protein 7 (64 aa).

Disordered stretches follow at residues 1–38 (MSSR…ADAA) and 45–64 (ANMK…SGKK). A compositionally biased stretch (basic and acidic residues) spans 27–38 (IAFKEKQKADAA). Over residues 53–64 (LVGGGIKKSGKK) the composition is skewed to gly residues.

Belongs to the TMA7 family. Interacts with the 40S ribosomal subunit.

It is found in the cytoplasm. Its subcellular location is the nucleus. Its function is as follows. Involved in protein synthesis. This is Translation machinery-associated protein 7 (TMA7) from Saccharomyces cerevisiae (strain ATCC 204508 / S288c) (Baker's yeast).